Consider the following 539-residue polypeptide: 3-hydroxy-3-methylglutaryl-coenzyme A reductase 1 (539 aa).

A helical transmembrane segment spans residues 63–83 (FATVVCQLASVVYLLSLFAHP). The linker stretch occupies residues 84-124 (DAPATTTGDDDDGQGGSRRARPAAAEPAPMHGHGGGMMEAD). A disordered region spans residues 87 to 116 (ATTTGDDDDGQGGSRRARPAAAEPAPMHGH). A compositionally biased stretch (low complexity) spans 105–114 (PAAAEPAPMH). Positions 125 to 539 (DEEIVAAVAS…SSKDVAKAAS (415 aa)) are catalytic. Glutamate 218 acts as the Charge relay system in catalysis. A glycan (N-linked (GlcNAc...) asparagine) is linked at asparagine 282. Active-site charge relay system residues include lysine 350 and aspartate 426. Residues 496-516 (LATIVAGSVLAGELSLLAALA) form a helical membrane-spanning segment. The Proton donor role is filled by histidine 524. An N-linked (GlcNAc...) asparagine glycan is attached at asparagine 528.

It belongs to the HMG-CoA reductase family.

The protein resides in the endoplasmic reticulum membrane. It carries out the reaction (R)-mevalonate + 2 NADP(+) + CoA = (3S)-3-hydroxy-3-methylglutaryl-CoA + 2 NADPH + 2 H(+). The protein operates within metabolic intermediate biosynthesis; (R)-mevalonate biosynthesis; (R)-mevalonate from acetyl-CoA: step 3/3. Functionally, catalyzes the synthesis of mevalonate. The specific precursor of all isoprenoid compounds present in plants. In Oryza sativa subsp. indica (Rice), this protein is 3-hydroxy-3-methylglutaryl-coenzyme A reductase 1 (HMG1).